A 311-amino-acid polypeptide reads, in one-letter code: 2-dehydro-3-deoxygluconokinase (311 aa).

Residues Gly34–Ser35, Tyr106–Arg108, and Arg166 contribute to the substrate site. ATP-binding positions include Asn164 to Arg166, Lys224 to Gly229, Gly253 to Asp256, and Ser283. The substrate site is built by Gly253 and Asp256. The active-site Proton acceptor is Asp256. Asp292 provides a ligand contact to substrate.

The protein belongs to the carbohydrate kinase PfkB family. In terms of assembly, homotetramer. It depends on a divalent metal cation as a cofactor.

It carries out the reaction 2-dehydro-3-deoxy-D-gluconate + ATP = 2-dehydro-3-deoxy-6-phospho-D-gluconate + ADP + H(+). It functions in the pathway carbohydrate acid metabolism; 2-dehydro-3-deoxy-D-gluconate degradation; D-glyceraldehyde 3-phosphate and pyruvate from 2-dehydro-3-deoxy-D-gluconate: step 1/2. Functionally, involved in the degradation of glucose via the semi-phosphorylative Entner-Doudoroff pathway. Catalyzes the phosphorylation of 2-keto-3-deoxygluconate (KDG) to produce 2-keto-3-deoxy-6-phosphogluconate (KDPG). Can also use GTP, but not ADP or AMP, as a phosphoryl donor and 2-keto-D-gluconate (KG) as a phosphoryl acceptor. The polypeptide is 2-dehydro-3-deoxygluconokinase (Sulfurisphaera tokodaii (strain DSM 16993 / JCM 10545 / NBRC 100140 / 7) (Sulfolobus tokodaii)).